The sequence spans 413 residues: Synaptosomal-associated protein 47 (413 aa).

The t-SNARE coiled-coil homology 1 domain occupies 109 to 171; sequence AANIPSHVTR…DVADRLLTEL (63 aa). The disordered stretch occupies residues 321 to 342; that stretch reads RHAASRPKGCTPHRELPTGGQE. One can recognise a t-SNARE coiled-coil homology 2 domain in the interval 350 to 412; sequence KNLPLFSEGE…DKQNRRMRKL (63 aa).

The protein belongs to the SVAP1 family. Associates with the BLOC-1 complex. Interacts with BLOC1S6. Forms a complex containing SNAP47, VAMP2 and STX1A. As to expression, ubiquitously expressed with the most abundant expression in the brain. In brain, most highly expressed in the glomerular layer of the olfactory bulb, the cortex, striatum, hippocampus, and colliculi (at protein level).

Its subcellular location is the endomembrane system. The protein localises to the cytoplasm. The protein resides in the perinuclear region. May play a role in intracellular membrane fusion. This chain is Synaptosomal-associated protein 47 (Snap47), found in Mus musculus (Mouse).